A 294-amino-acid chain; its full sequence is tRNA pseudouridine synthase B (294 aa).

The active-site Nucleophile is the Asp-39.

This sequence belongs to the pseudouridine synthase TruB family. Type 1 subfamily.

The enzyme catalyses uridine(55) in tRNA = pseudouridine(55) in tRNA. Responsible for synthesis of pseudouridine from uracil-55 in the psi GC loop of transfer RNAs. This chain is tRNA pseudouridine synthase B, found in Streptococcus pyogenes serotype M5 (strain Manfredo).